The chain runs to 209 residues: C-type lectin domain family 6 member A (209 aa).

At 1-20 (MVQERQSQGKGVCWTLRLWS) the chain is on the cytoplasmic side. A helical; Signal-anchor for type II membrane protein transmembrane segment spans residues 21–43 (AAVISMLLLSTCFIASCVVTYQF). Residues 44 to 209 (IMDQPSRRLY…SICEMKKIYL (166 aa)) lie on the Extracellular side of the membrane. Disulfide bonds link Cys64–Cys78, Cys79–Cys90, Cys107–Cys202, and Cys176–Cys194. The C-type lectin domain maps to 86-203 (FGSSCYLIST…CDSKHNSICE (118 aa)). Positions 116, 118, and 122 each coordinate Ca(2+). N-linked (GlcNAc...) asparagine glycosylation is present at Asn131. The Ca(2+) site is built by Glu168, Asn170, and Glu174. Residues 168–170 (EPN), Glu174, Trp182, and 190–191 (ND) each bind alpha-D-mannopyranose. Residues Asn190, Asp191, and Glu203 each coordinate Ca(2+).

As to quaternary structure, associated with FCER1G. Heterodimer with CLEC4D; this heterodimer forms a pattern recognition receptor (PRR) against fungal infection. As to expression, expressed by the XS52 DC (dendritic cell) line (at protein level). Expressed constitutively by the epidermis, and skin resident DC appear to be the major source of this expression. Expressed in the spleen and thymus. Expression was undetectable in non-DC lines, including macrophage lines (J774 and Raw), T-cell lines (7-17, HDK-1, and D10), B-cell hybridoma (5C5), a keratinocyte line (Pam 212), and a fibroblast line (NS01).

Its subcellular location is the cell membrane. Calcium-dependent lectin that acts as a pattern recognition receptor (PRR) of the innate immune system: specifically recognizes and binds alpha-mannans on C.albicans hypheas. Binding of C.albicans alpha-mannans to this receptor complex leads to phosphorylation of the immunoreceptor tyrosine-based activation motif (ITAM) of FCER1G, triggering activation of SYK, CARD9 and NF-kappa-B, consequently driving maturation of antigen-presenting cells and shaping antigen-specific priming of T-cells toward effector T-helper 1 and T-helper 17 cell subtypes. Also recognizes, in a mannose-dependent manner, allergens from house dust mite and fungi, by promoting cysteinyl leukotriene production. Recognizes soluble elements from the eggs of Shistosoma mansoni altering adaptive immune responses. The sequence is that of C-type lectin domain family 6 member A from Mus musculus (Mouse).